The following is a 250-amino-acid chain: 3-deoxy-manno-octulosonate cytidylyltransferase (250 aa).

It belongs to the KdsB family.

It localises to the cytoplasm. It carries out the reaction 3-deoxy-alpha-D-manno-oct-2-ulosonate + CTP = CMP-3-deoxy-beta-D-manno-octulosonate + diphosphate. The protein operates within nucleotide-sugar biosynthesis; CMP-3-deoxy-D-manno-octulosonate biosynthesis; CMP-3-deoxy-D-manno-octulosonate from 3-deoxy-D-manno-octulosonate and CTP: step 1/1. It participates in bacterial outer membrane biogenesis; lipopolysaccharide biosynthesis. Its function is as follows. Activates KDO (a required 8-carbon sugar) for incorporation into bacterial lipopolysaccharide in Gram-negative bacteria. In Janthinobacterium sp. (strain Marseille) (Minibacterium massiliensis), this protein is 3-deoxy-manno-octulosonate cytidylyltransferase.